Here is a 141-residue protein sequence, read N- to C-terminus: Hemoglobin subunit alpha (141 aa).

In terms of domain architecture, Globin spans 1–141 (VLSDNDKTNV…VSTVLTSKYR (141 aa)). Phosphoserine is present on serine 3. Residue lysine 7 is modified to N6-succinyllysine. Threonine 8 is modified (phosphothreonine). Residue lysine 11 is modified to N6-succinyllysine. Lysine 16 is modified (N6-acetyllysine; alternate). Lysine 16 bears the N6-succinyllysine; alternate mark. A Phosphotyrosine modification is found at tyrosine 24. Serine 35 is modified (phosphoserine). Lysine 40 is modified (N6-succinyllysine). Histidine 58 contributes to the O2 binding site. Histidine 87 is a heme b binding site. A Phosphoserine modification is found at serine 102. The residue at position 108 (threonine 108) is a Phosphothreonine. Serine 124 carries the phosphoserine modification. A phosphothreonine mark is found at threonine 134 and threonine 137. A Phosphoserine modification is found at serine 138.

The protein belongs to the globin family. In terms of assembly, heterotetramer of two alpha chains and two beta chains. In terms of tissue distribution, red blood cells.

Its function is as follows. Involved in oxygen transport from the lung to the various peripheral tissues. Functionally, hemopressin acts as an antagonist peptide of the cannabinoid receptor CNR1. Hemopressin-binding efficiently blocks cannabinoid receptor CNR1 and subsequent signaling. The polypeptide is Hemoglobin subunit alpha (HBA) (Loxodonta africana (African elephant)).